The following is a 246-amino-acid chain: 14-3-3 protein eta (246 aa).

At Gly2 the chain carries N-acetylglycine. Phosphoserine occurs at positions 25 and 59.

It belongs to the 14-3-3 family. In terms of assembly, homodimer. Interacts with many nuclear hormone receptors and cofactors including AR, ESR1, ESR2, MC2R, NR3C1, NRIP1, PPARBP and THRA. Interacts with ABL1 (phosphorylated form); the interaction retains it in the cytoplasm. Interacts with ARHGEF28 and CDK16. Weakly interacts with CDKN1B. Interacts with GAB2. Interacts with KCNK18 in a phosphorylation-dependent manner. Interacts with SAMSN1. Interacts with the 'Ser-241' phosphorylated form of PDPK1. Interacts with the 'Thr-369' phosphorylated form of DAPK2. Interacts with PI4KB, TBC1D22A and TBC1D22B. Interacts with SLITRK1. Interacts with MEFV. Phosphorylated on Ser-59 by protein kinase C delta type catalytic subunit in a sphingosine-dependent fashion. In terms of tissue distribution, expressed mainly in the brain and present in other tissues albeit at lower levels.

In terms of biological role, adapter protein implicated in the regulation of a large spectrum of both general and specialized signaling pathways. Binds to a large number of partners, usually by recognition of a phosphoserine or phosphothreonine motif. Binding generally results in the modulation of the activity of the binding partner. Negatively regulates the kinase activity of PDPK1. The protein is 14-3-3 protein eta (YWHAH) of Homo sapiens (Human).